Reading from the N-terminus, the 44-residue chain is Photosystem I reaction center subunit IX (44 aa).

Residues 7-27 (YLSVAPVISTLWFGSLAGLLI) traverse the membrane as a helical segment.

The protein belongs to the PsaJ family.

Its subcellular location is the plastid. The protein localises to the chloroplast thylakoid membrane. Its function is as follows. May help in the organization of the PsaE and PsaF subunits. The chain is Photosystem I reaction center subunit IX from Populus alba (White poplar).